The chain runs to 247 residues: Adenosylcobinamide-GDP ribazoletransferase (247 aa).

A run of 5 helical transmembrane segments spans residues 34-54 (IVMF…IFIL), 59-79 (CGIP…TGGF), 113-133 (GGLA…ELAL), 138-158 (VLAA…LLMY), and 194-214 (VLLP…AIFI).

The protein belongs to the CobS family. Mg(2+) is required as a cofactor.

The protein localises to the cell inner membrane. The enzyme catalyses alpha-ribazole + adenosylcob(III)inamide-GDP = adenosylcob(III)alamin + GMP + H(+). It catalyses the reaction alpha-ribazole 5'-phosphate + adenosylcob(III)inamide-GDP = adenosylcob(III)alamin 5'-phosphate + GMP + H(+). It participates in cofactor biosynthesis; adenosylcobalamin biosynthesis; adenosylcobalamin from cob(II)yrinate a,c-diamide: step 7/7. Its function is as follows. Joins adenosylcobinamide-GDP and alpha-ribazole to generate adenosylcobalamin (Ado-cobalamin). Also synthesizes adenosylcobalamin 5'-phosphate from adenosylcobinamide-GDP and alpha-ribazole 5'-phosphate. This Salmonella arizonae (strain ATCC BAA-731 / CDC346-86 / RSK2980) protein is Adenosylcobinamide-GDP ribazoletransferase.